The primary structure comprises 329 residues: MMSSAVCRLAPSPTGAQHLGNARTFLIAYWSARAQNARLILRIEDIDSPRIKPWATEQAITDLRWLGMDWDGDPIVQTERSPLYDEARNQLMDADRVYPCSCTRRDIEAAASAPHESEASGWTPDAPVYPGTCASWKNGDPLPEDKPFCFRFRMQATPDRFFDRVHGEVACNPIQDIGDFPITRKAESAADCLAAYQLAVVVDDIDAGVTEVVRGDDLILSTFRQLQLYEALGHSPPSHAHVPLVTGTDGRRLAKRHGDTRLSHFREQGMPPETIVRWAAKSSGLCPDSDAALSERTLDQIHQQMIDRFDWVRIHRQPTVVDDFGSTTD.

L-glutamate contacts are provided by residues 8 to 12 (RLAPS) and Glu-44. The 'HIGH' region signature appears at 11–21 (PSPTGAQHLGN). Positions 100, 102, 129, and 133 each coordinate Zn(2+). L-glutamate-binding residues include Tyr-196 and Arg-214. Positions 252 to 256 (RLAKR) match the 'KMSKS' region motif. Lys-255 provides a ligand contact to ATP.

It belongs to the class-I aminoacyl-tRNA synthetase family. GluQ subfamily. Zn(2+) serves as cofactor.

Functionally, catalyzes the tRNA-independent activation of glutamate in presence of ATP and the subsequent transfer of glutamate onto a tRNA(Asp). Glutamate is transferred on the 2-amino-5-(4,5-dihydroxy-2-cyclopenten-1-yl) moiety of the queuosine in the wobble position of the QUC anticodon. The sequence is that of Glutamyl-Q tRNA(Asp) synthetase from Rhodopirellula baltica (strain DSM 10527 / NCIMB 13988 / SH1).